Consider the following 341-residue polypeptide: S-adenosylmethionine:tRNA ribosyltransferase-isomerase (341 aa).

Belongs to the QueA family. In terms of assembly, monomer.

Its subcellular location is the cytoplasm. The enzyme catalyses 7-aminomethyl-7-carbaguanosine(34) in tRNA + S-adenosyl-L-methionine = epoxyqueuosine(34) in tRNA + adenine + L-methionine + 2 H(+). Its pathway is tRNA modification; tRNA-queuosine biosynthesis. Its function is as follows. Transfers and isomerizes the ribose moiety from AdoMet to the 7-aminomethyl group of 7-deazaguanine (preQ1-tRNA) to give epoxyqueuosine (oQ-tRNA). The protein is S-adenosylmethionine:tRNA ribosyltransferase-isomerase of Chlorobium phaeovibrioides (strain DSM 265 / 1930) (Prosthecochloris vibrioformis (strain DSM 265)).